We begin with the raw amino-acid sequence, 130 residues long: Ornithine decarboxylase antizyme (130 aa).

The span at 1-14 (SDVPVHHRTDHDRA) shows a compositional bias: basic and acidic residues. Positions 1 to 56 (SDVPVHHRTDHDRASLLTGSSRKSSVDSAGGSLFEASSRASSPSSSSSSECSDTES) are disordered. A compositionally biased stretch (polar residues) spans 17 to 27 (LTGSSRKSSVD). The segment covering 32–51 (SLFEASSRASSPSSSSSSEC) has biased composition (low complexity).

This sequence belongs to the ODC antizyme family. As to quaternary structure, interacts with ODC1 and thereby sterically blocks ODC homodimerization.

In terms of biological role, ornithine decarboxylase (ODC) antizyme protein that negatively regulates ODC activity and intracellular polyamine biosynthesis and uptake in response to increased intracellular polyamine levels. Binds to ODC monomers, inhibiting the assembly of the functional ODC homodimer, and targets the monomers for ubiquitin-independent proteolytic destruction by the 26S proteasome. This is Ornithine decarboxylase antizyme (Oda) from Drosophila virilis (Fruit fly).